Reading from the N-terminus, the 309-residue chain is Verprolin (309 aa).

A compositionally biased stretch (pro residues) spans 1–13; the sequence is MAPAPPPPPPAPA. Residues 1–273 are disordered; sequence MAPAPPPPPP…PNRVDDHGRF (273 aa). The 18-residue stretch at 27 to 44 folds into the WH2 domain; the sequence is DRSALLNSIQKGKKLKKA. Residues 82-91 are compositionally biased toward polar residues; sequence LPTSSNNTQQ. A compositionally biased stretch (pro residues) spans 141–207; the sequence is TSAPPRPSIP…PPKVPPPPLS (67 aa).

The protein belongs to the verprolin family. As to quaternary structure, interacts with wsp1. Interacts with myo1 (via SH3 domain). Interacts with actin monomers.

The protein resides in the cytoplasm. The protein localises to the cytoskeleton. In terms of biological role, involved in cytoskeletal organization and cellular growth. May exert its effects on the cytoskeleton directly, or indirectly via proline-binding proteins such as profilin or proteins possessing SH3 domains. Plays a role in actin patch assembly by enhancing the ability of myo1 to stimulate actin polymerization by the Arp2/3 complex. The chain is Verprolin from Schizosaccharomyces pombe (strain 972 / ATCC 24843) (Fission yeast).